The sequence spans 59 residues: Large ribosomal subunit protein bL32 (59 aa).

Over residues 1–16 (MAVPKRKTSPSKRGMR) the composition is skewed to basic residues. The disordered stretch occupies residues 1 to 59 (MAVPKRKTSPSKRGMRRSADALKAPTYVEDKNSGELRRPHHIDLKSGMYRGRQVLEAKE). Basic and acidic residues predominate over residues 28-44 (VEDKNSGELRRPHHIDL).

This sequence belongs to the bacterial ribosomal protein bL32 family.

In Brucella anthropi (strain ATCC 49188 / DSM 6882 / CCUG 24695 / JCM 21032 / LMG 3331 / NBRC 15819 / NCTC 12168 / Alc 37) (Ochrobactrum anthropi), this protein is Large ribosomal subunit protein bL32.